Consider the following 69-residue polypeptide: Beta-defensin 114 (69 aa).

The signal sequence occupies residues 1-26 (MRIFYYLHFLCYVTFILPATCTLVNA). 3 cysteine pairs are disulfide-bonded: C29-C57, C36-C50, and C40-C58.

It belongs to the beta-defensin family. As to expression, expressed in epididymis, predominantly in the caput (at protein level).

Its subcellular location is the secreted. Functionally, has a salt-sensitive antimicrobial activity against Gram-negative bacteria, including E.coli, Gram-positive, including S.aureus, and fungi, including C.albicans. Binds to and neutralizes bacterial lipopolysaccharides (LPS), abolishing TNF production by macrophages challenged with LPS. Rescues the LPS-induced reduction of sperm motility in vitro and may protect from LPS-induced lethality. In Homo sapiens (Human), this protein is Beta-defensin 114 (DEFB114).